We begin with the raw amino-acid sequence, 176 residues long: Small ribosomal subunit protein uS8c (176 aa).

The protein belongs to the universal ribosomal protein uS8 family. As to quaternary structure, part of the 30S ribosomal subunit.

The protein localises to the plastid. It is found in the chloroplast. Its function is as follows. One of the primary rRNA binding proteins, it binds directly to 16S rRNA central domain where it helps coordinate assembly of the platform of the 30S subunit. The protein is Small ribosomal subunit protein uS8c (rps8) of Stigeoclonium helveticum (Green alga).